Reading from the N-terminus, the 443-residue chain is Carbohydrate sulfotransferase 9 (443 aa).

At 1–12 the chain is on the cytoplasmic side; that stretch reads MQPSEMVMNPKQ. A helical; Signal-anchor for type II membrane protein transmembrane segment spans residues 13–33; it reads VFLSVLIFGVAGLLLFMYLQV. Residues 34–443 lie on the Lumenal side of the membrane; that stretch reads WIEEQHTGRV…LMFNYTTPFL (410 aa). Residues 108 to 128 are compositionally biased toward polar residues; the sequence is LTKTSHSQGGDQALSKSTGSP. The segment at 108–132 is disordered; it reads LTKTSHSQGGDQALSKSTGSPTEKL. N-linked (GlcNAc...) asparagine glycosylation occurs at Asn159. 220-226 serves as a coordination point for 3'-phosphoadenylyl sulfate; that stretch reads PKAGCSN. A glycan (N-linked (GlcNAc...) asparagine) is linked at Asn243. Position 280 to 288 (280 to 288) interacts with 3'-phosphoadenylyl sulfate; it reads RDPMERLVS. N-linked (GlcNAc...) asparagine glycans are attached at residues Asn324 and Asn437.

It belongs to the sulfotransferase 2 family. In terms of tissue distribution, highly expressed in trachea. Also expressed in fetal lung, adult pancreas, testis and salivary gland. Expressed at low level in pituitary gland, apex of the heart, adult lung, prostate and mammary gland. Weakly or not expressed in heart, liver and spinal cord.

It is found in the golgi apparatus membrane. Its subcellular location is the secreted. Its function is as follows. Catalyzes the transfer of sulfate to position 4 of non-reducing N-acetylgalactosamine (GalNAc) residues in both N-glycans and O-glycans. Participates in biosynthesis of glycoprotein hormones lutropin and thyrotropin, by mediating sulfation of their carbohydrate structures. Has a higher activity toward carbonic anhydrase VI than toward lutropin. Only active against terminal GalNAcbeta1,GalNAcbeta. Isoform 2, but not isoform 1, is active toward chondroitin. This Homo sapiens (Human) protein is Carbohydrate sulfotransferase 9 (CHST9).